Here is a 476-residue protein sequence, read N- to C-terminus: Aspartyl/glutamyl-tRNA(Asn/Gln) amidotransferase subunit B (476 aa).

It belongs to the GatB/GatE family. GatB subfamily. In terms of assembly, heterotrimer of A, B and C subunits.

It catalyses the reaction L-glutamyl-tRNA(Gln) + L-glutamine + ATP + H2O = L-glutaminyl-tRNA(Gln) + L-glutamate + ADP + phosphate + H(+). The catalysed reaction is L-aspartyl-tRNA(Asn) + L-glutamine + ATP + H2O = L-asparaginyl-tRNA(Asn) + L-glutamate + ADP + phosphate + 2 H(+). In terms of biological role, allows the formation of correctly charged Asn-tRNA(Asn) or Gln-tRNA(Gln) through the transamidation of misacylated Asp-tRNA(Asn) or Glu-tRNA(Gln) in organisms which lack either or both of asparaginyl-tRNA or glutaminyl-tRNA synthetases. The reaction takes place in the presence of glutamine and ATP through an activated phospho-Asp-tRNA(Asn) or phospho-Glu-tRNA(Gln). The protein is Aspartyl/glutamyl-tRNA(Asn/Gln) amidotransferase subunit B of Listeria welshimeri serovar 6b (strain ATCC 35897 / DSM 20650 / CCUG 15529 / CIP 8149 / NCTC 11857 / SLCC 5334 / V8).